A 220-amino-acid polypeptide reads, in one-letter code: Germin-like protein subfamily T member 2 (220 aa).

The N-terminal stretch at 1-27 (MTTLQISSSLFRSFLLVICVFVIPSLS) is a signal peptide. An intrachain disulfide couples Cys37 to Cys52. Residues 64 to 212 (SGLGGPLNTS…TFRTDDVTVN (149 aa)) form the Cupin type-1 domain. Asn71 carries an N-linked (GlcNAc...) asparagine glycan. Mn(2+)-binding residues include His112, His114, and Glu119. N-linked (GlcNAc...) asparagine glycosylation occurs at Asn136. His158 provides a ligand contact to Mn(2+).

It belongs to the germin family. Oligomer (believed to be a pentamer but probably hexamer).

The protein resides in the secreted. Its subcellular location is the extracellular space. The protein localises to the apoplast. In terms of biological role, may play a role in plant defense. Probably has no oxalate oxidase activity even if the active site is conserved. The protein is Germin-like protein subfamily T member 2 of Arabidopsis thaliana (Mouse-ear cress).